The primary structure comprises 177 residues: Glia associated membrane protein glam-1 (177 aa).

The next 3 helical transmembrane spans lie at 19–39, 42–62, and 76–96; these read PLVV…FWMS, FGMA…LFGA, and VTFA…VVFA.

The protein resides in the membrane. The chain is Glia associated membrane protein glam-1 from Caenorhabditis elegans.